A 62-amino-acid chain; its full sequence is Large ribosomal subunit protein eL24 (62 aa).

C6, C9, C32, and C36 together coordinate Zn(2+). The C4-type zinc-finger motif lies at C6–C36.

The protein belongs to the eukaryotic ribosomal protein eL24 family. Part of the 50S ribosomal subunit. Forms a cluster with proteins L3 and L14. Zn(2+) is required as a cofactor.

Binds to the 23S rRNA. This Methanococcus vannielii (strain ATCC 35089 / DSM 1224 / JCM 13029 / OCM 148 / SB) protein is Large ribosomal subunit protein eL24.